A 60-amino-acid polypeptide reads, in one-letter code: Large ribosomal subunit protein uL30 (60 aa).

It belongs to the universal ribosomal protein uL30 family. Part of the 50S ribosomal subunit.

The polypeptide is Large ribosomal subunit protein uL30 (Baumannia cicadellinicola subsp. Homalodisca coagulata).